We begin with the raw amino-acid sequence, 408 residues long: Glyceraldehyde-3-phosphate dehydrogenase, testis-specific (408 aa).

Positions 1 to 73 (MSKRDIVLTN…TPPPKMVSVA (73 aa)) are testis-specific N-terminal extension. Residues 19 to 68 (QPCPVTRAPPPPEPKAEVEPQPQPEPTPVREEIKPPPPPLPPHPATPPPK) are disordered. A compositionally biased stretch (pro residues) spans 53 to 68 (PPPPPLPPHPATPPPK). NAD(+) contacts are provided by residues 85-86 (RI), Asp-106, Lys-151, Tyr-173, and Ser-193. D-glyceraldehyde 3-phosphate is bound by residues 223-225 (SCT), Thr-254, 283-284 (TG), and Arg-306. The active-site Nucleophile is Cys-224. Asn-388 contacts NAD(+).

This sequence belongs to the glyceraldehyde-3-phosphate dehydrogenase family. Homotetramer. Interacts with ARRB2; the interaction is detected in the nucleus upon OR1D2 stimulation. As to expression, testis specific.

The protein localises to the cytoplasm. The enzyme catalyses D-glyceraldehyde 3-phosphate + phosphate + NAD(+) = (2R)-3-phospho-glyceroyl phosphate + NADH + H(+). Its pathway is carbohydrate degradation; glycolysis; pyruvate from D-glyceraldehyde 3-phosphate: step 1/5. In terms of biological role, may play an important role in regulating the switch between different pathways for energy production during spermiogenesis and in the spermatozoon. Required for sperm motility and male fertility. This Homo sapiens (Human) protein is Glyceraldehyde-3-phosphate dehydrogenase, testis-specific (GAPDHS).